Here is a 408-residue protein sequence, read N- to C-terminus: NADH-quinone oxidoreductase subunit D (408 aa).

The protein belongs to the complex I 49 kDa subunit family. As to quaternary structure, NDH-1 is composed of 14 different subunits. Subunits NuoB, C, D, E, F, and G constitute the peripheral sector of the complex.

The protein resides in the cell inner membrane. The catalysed reaction is a quinone + NADH + 5 H(+)(in) = a quinol + NAD(+) + 4 H(+)(out). Functionally, NDH-1 shuttles electrons from NADH, via FMN and iron-sulfur (Fe-S) centers, to quinones in the respiratory chain. The immediate electron acceptor for the enzyme in this species is believed to be ubiquinone. Couples the redox reaction to proton translocation (for every two electrons transferred, four hydrogen ions are translocated across the cytoplasmic membrane), and thus conserves the redox energy in a proton gradient. The polypeptide is NADH-quinone oxidoreductase subunit D (Wolinella succinogenes (strain ATCC 29543 / DSM 1740 / CCUG 13145 / JCM 31913 / LMG 7466 / NCTC 11488 / FDC 602W) (Vibrio succinogenes)).